A 155-amino-acid chain; its full sequence is MPTPKKGPRLASSPAHERLMLANMATSLFQNGRITTTLPKAKRLRPLAERLITLAKRGDLHNRRRVMRVIRNKSVVHKLFTEIAEQMEQREGGYTRIVKIAPRRGDAAPAAIIELVTEPVSPKQAVVKEAEAATKVAAAEAPEAAAEEATAENAE.

Belongs to the bacterial ribosomal protein bL17 family. As to quaternary structure, part of the 50S ribosomal subunit. Contacts protein L32.

The sequence is that of Large ribosomal subunit protein bL17 from Bifidobacterium adolescentis (strain ATCC 15703 / DSM 20083 / NCTC 11814 / E194a).